A 114-amino-acid chain; its full sequence is Hydrogenase maturation factor HypA (114 aa).

A Ni(2+)-binding site is contributed by H2. Zn(2+)-binding residues include C73, C76, C89, and C92.

Belongs to the HypA/HybF family.

In terms of biological role, involved in the maturation of [NiFe] hydrogenases. Required for nickel insertion into the metal center of the hydrogenase. This Azoarcus sp. (strain BH72) protein is Hydrogenase maturation factor HypA.